The following is a 328-amino-acid chain: N-acetyl-gamma-glutamyl-phosphate reductase (328 aa).

Cysteine 143 is a catalytic residue.

Belongs to the NAGSA dehydrogenase family. Type 1 subfamily.

The protein localises to the cytoplasm. It catalyses the reaction N-acetyl-L-glutamate 5-semialdehyde + phosphate + NADP(+) = N-acetyl-L-glutamyl 5-phosphate + NADPH + H(+). The protein operates within amino-acid biosynthesis; L-arginine biosynthesis; N(2)-acetyl-L-ornithine from L-glutamate: step 3/4. Functionally, catalyzes the NADPH-dependent reduction of N-acetyl-5-glutamyl phosphate to yield N-acetyl-L-glutamate 5-semialdehyde. In Methanosphaerula palustris (strain ATCC BAA-1556 / DSM 19958 / E1-9c), this protein is N-acetyl-gamma-glutamyl-phosphate reductase.